Here is a 341-residue protein sequence, read N- to C-terminus: Phenylalanine--tRNA ligase alpha subunit (341 aa).

Residue Glu-254 participates in Mg(2+) binding.

It belongs to the class-II aminoacyl-tRNA synthetase family. Phe-tRNA synthetase alpha subunit type 1 subfamily. In terms of assembly, tetramer of two alpha and two beta subunits. The cofactor is Mg(2+).

Its subcellular location is the cytoplasm. It catalyses the reaction tRNA(Phe) + L-phenylalanine + ATP = L-phenylalanyl-tRNA(Phe) + AMP + diphosphate + H(+). This Chlorobium limicola (strain DSM 245 / NBRC 103803 / 6330) protein is Phenylalanine--tRNA ligase alpha subunit.